The chain runs to 156 residues: MNFNATLIGQTVAFIIFVWFCMKFVWPPLMNAIEARQKRIADGLADADRAVKDLELAQAKATDQLKEAKVTANEIIEQANKRKAQIVEEAKAEADAERAKIIAQGKAEIEAERNRVKEDLRKQVATLAIMGAEKILERSIDPAAHSDIVNKLVAEI.

The chain crosses the membrane as a helical span at residues 7 to 27 (LIGQTVAFIIFVWFCMKFVWP).

It belongs to the ATPase B chain family. F-type ATPases have 2 components, F(1) - the catalytic core - and F(0) - the membrane proton channel. F(1) has five subunits: alpha(3), beta(3), gamma(1), delta(1), epsilon(1). F(0) has three main subunits: a(1), b(2) and c(10-14). The alpha and beta chains form an alternating ring which encloses part of the gamma chain. F(1) is attached to F(0) by a central stalk formed by the gamma and epsilon chains, while a peripheral stalk is formed by the delta and b chains.

The protein localises to the cell inner membrane. F(1)F(0) ATP synthase produces ATP from ADP in the presence of a proton or sodium gradient. F-type ATPases consist of two structural domains, F(1) containing the extramembraneous catalytic core and F(0) containing the membrane proton channel, linked together by a central stalk and a peripheral stalk. During catalysis, ATP synthesis in the catalytic domain of F(1) is coupled via a rotary mechanism of the central stalk subunits to proton translocation. Its function is as follows. Component of the F(0) channel, it forms part of the peripheral stalk, linking F(1) to F(0). The protein is ATP synthase subunit b of Shewanella sp. (strain MR-4).